The sequence spans 121 residues: Phosphoribosyl-AMP cyclohydrolase (121 aa).

Mg(2+) is bound at residue aspartate 76. Residue cysteine 77 participates in Zn(2+) binding. Residues aspartate 78 and aspartate 80 each coordinate Mg(2+). Zn(2+) contacts are provided by cysteine 93 and cysteine 100.

This sequence belongs to the PRA-CH family. As to quaternary structure, homodimer. It depends on Mg(2+) as a cofactor. Zn(2+) is required as a cofactor.

It localises to the cytoplasm. The enzyme catalyses 1-(5-phospho-beta-D-ribosyl)-5'-AMP + H2O = 1-(5-phospho-beta-D-ribosyl)-5-[(5-phospho-beta-D-ribosylamino)methylideneamino]imidazole-4-carboxamide. The protein operates within amino-acid biosynthesis; L-histidine biosynthesis; L-histidine from 5-phospho-alpha-D-ribose 1-diphosphate: step 3/9. Functionally, catalyzes the hydrolysis of the adenine ring of phosphoribosyl-AMP. This Paracoccus denitrificans (strain Pd 1222) protein is Phosphoribosyl-AMP cyclohydrolase.